Consider the following 356-residue polypeptide: GTPase Obg (356 aa).

The Obg domain occupies 1-159; it reads MKFLDEAKVY…RWIWLRMKLI (159 aa). Residues 160 to 327 form the OBG-type G domain; it reads ADAGLVGLPN…ALRKLADVIS (168 aa). Residues 166–173, 191–195, 212–215, 279–282, and 308–310 contribute to the GTP site; these read GLPNAGKS, FTTLH, DIPG, NKID, and SGA. Positions 173 and 193 each coordinate Mg(2+). The disordered stretch occupies residues 332–356; the sequence is SIKAKSTSDSAATEEPWAAPLPPQG.

The protein belongs to the TRAFAC class OBG-HflX-like GTPase superfamily. OBG GTPase family. As to quaternary structure, monomer. The cofactor is Mg(2+).

The protein localises to the cytoplasm. Functionally, an essential GTPase which binds GTP, GDP and possibly (p)ppGpp with moderate affinity, with high nucleotide exchange rates and a fairly low GTP hydrolysis rate. Plays a role in control of the cell cycle, stress response, ribosome biogenesis and in those bacteria that undergo differentiation, in morphogenesis control. This chain is GTPase Obg, found in Bradyrhizobium sp. (strain BTAi1 / ATCC BAA-1182).